A 445-amino-acid polypeptide reads, in one-letter code: Phosphoglucosamine mutase (445 aa).

S101 acts as the Phosphoserine intermediate in catalysis. Positions 101, 240, 242, and 244 each coordinate Mg(2+). A Phosphoserine modification is found at S101.

It belongs to the phosphohexose mutase family. The cofactor is Mg(2+). Activated by phosphorylation.

It carries out the reaction alpha-D-glucosamine 1-phosphate = D-glucosamine 6-phosphate. In terms of biological role, catalyzes the conversion of glucosamine-6-phosphate to glucosamine-1-phosphate. This is Phosphoglucosamine mutase from Azotobacter vinelandii (strain DJ / ATCC BAA-1303).